Consider the following 276-residue polypeptide: MPLMKTKPTSPGRRSMVKVVNPDLHKGKPFAPLLEPQFQKAGRNNNGHITTRHKGGGHKHHYRVVDFKRNDKDGIPAKVERLEYDPNRSANIALIVFADGERRYIPAAKGMTVGQSLMSGSEAPIKSGNNLPIRNIPVGSTIHCVEIMPGKGAQVARSAGGSAVLLAREGVYAQVRLRSGEVRRVLIECRATIGEVGNEEHSLRVIGKAGANRWRGIRPTVRGVAMNPVDHPHGGGEGKTGEGRVPVSPWGTPTKGYRTRRNKRTTSMIVQRRQKR.

The interval 224-276 is disordered; that stretch reads VAMNPVDHPHGGGEGKTGEGRVPVSPWGTPTKGYRTRRNKRTTSMIVQRRQKR. Basic and acidic residues predominate over residues 230-242; it reads DHPHGGGEGKTGE.

It belongs to the universal ribosomal protein uL2 family. In terms of assembly, part of the 50S ribosomal subunit. Forms a bridge to the 30S subunit in the 70S ribosome.

Functionally, one of the primary rRNA binding proteins. Required for association of the 30S and 50S subunits to form the 70S ribosome, for tRNA binding and peptide bond formation. It has been suggested to have peptidyltransferase activity; this is somewhat controversial. Makes several contacts with the 16S rRNA in the 70S ribosome. The sequence is that of Large ribosomal subunit protein uL2 from Polynucleobacter asymbioticus (strain DSM 18221 / CIP 109841 / QLW-P1DMWA-1) (Polynucleobacter necessarius subsp. asymbioticus).